A 117-amino-acid polypeptide reads, in one-letter code: MPRAKSSVVSRKRHKKILKLAKGYRGAKSKLYRIANQQVMKSLVYAYRDRKARKRDFRKLWITRINAAARMNGISYSRLMNGLKLAGVDINRKMLADMAVNDAQAFGRLVEIAKAKL.

It belongs to the bacterial ribosomal protein bL20 family.

Its function is as follows. Binds directly to 23S ribosomal RNA and is necessary for the in vitro assembly process of the 50S ribosomal subunit. It is not involved in the protein synthesizing functions of that subunit. This is Large ribosomal subunit protein bL20 from Pelotomaculum thermopropionicum (strain DSM 13744 / JCM 10971 / SI).